The sequence spans 407 residues: NADH-quinone oxidoreductase subunit D (407 aa).

This sequence belongs to the complex I 49 kDa subunit family. As to quaternary structure, NDH-1 is composed of 14 different subunits. Subunits NuoB, C, D, E, F, and G constitute the peripheral sector of the complex.

The protein resides in the cell inner membrane. It catalyses the reaction a quinone + NADH + 5 H(+)(in) = a quinol + NAD(+) + 4 H(+)(out). In terms of biological role, NDH-1 shuttles electrons from NADH, via FMN and iron-sulfur (Fe-S) centers, to quinones in the respiratory chain. The immediate electron acceptor for the enzyme in this species is believed to be ubiquinone. Couples the redox reaction to proton translocation (for every two electrons transferred, four hydrogen ions are translocated across the cytoplasmic membrane), and thus conserves the redox energy in a proton gradient. This is NADH-quinone oxidoreductase subunit D from Roseobacter denitrificans (strain ATCC 33942 / OCh 114) (Erythrobacter sp. (strain OCh 114)).